The sequence spans 60 residues: UPF0434 protein YcaR (60 aa).

This sequence belongs to the UPF0434 family.

The chain is UPF0434 protein YcaR from Salmonella agona (strain SL483).